The chain runs to 1583 residues: Protein mesh (1583 aa).

Residues 1 to 21 (MGVKIKLVLAVVLILSANVLG) form the signal peptide. Residues 22 to 1182 (QDEIVNDTES…EFSQRALFLT (1161 aa)) are Extracellular-facing. One can recognise an NIDO domain in the interval 260–415 (GIYFRLDRDL…GRHIFRIDEN (156 aa)). Residues 647 to 798 (GQRWSNSMCN…VGCETFRFER (152 aa)) form the AMOP domain. Residues 811–1019 (GVAGIFGDPH…HWQLTDREQR (209 aa)) form the VWFD domain. Positions 1110-1170 (ISCGILETPR…PDYGYTECLR (61 aa)) constitute a Sushi domain. Disulfide bonds link cysteine 1112–cysteine 1152 and cysteine 1138–cysteine 1168. The helical transmembrane segment at 1183–1203 (WGVIVAVILPLGLLICLLWFW) threads the bilayer. The Cytoplasmic portion of the chain corresponds to 1204 to 1472 (CWHKPRSEGK…QEYSSRTLGA (269 aa)). The span at 1232–1250 (LRSSSMGNITDTMKSSTIP) shows a compositional bias: polar residues. The tract at residues 1232 to 1448 (LRSSSMGNIT…IPEAPKSAPV (217 aa)) is disordered. The span at 1291 to 1300 (GKSDSGKSDK) shows a compositional bias: basic and acidic residues. Polar residues predominate over residues 1405–1416 (PIPSQYSPTYSE). A helical transmembrane segment spans residues 1473-1493 (TWGIISAVMLPIIIILICVAW). At 1494–1583 (RILQRRKAEE…RQWGGETEIN (90 aa)) the chain is on the extracellular side. Over residues 1521–1539 (DSVKVTSDDESIPYKKDVT) the composition is skewed to basic and acidic residues. The tract at residues 1521-1583 (DSVKVTSDDE…RQWGGETEIN (63 aa)) is disordered.

In fifth instar larvae, expressed in midgut epithelial cells (at protein level).

It localises to the membrane. The protein localises to the cell junction. Its subcellular location is the septate junction. The protein resides in the lateral cell membrane. Its function is as follows. May be required for the proper organization of smooth septate junctions and for the barrier function of the midgut epithelium. This chain is Protein mesh, found in Bombyx mori (Silk moth).